Reading from the N-terminus, the 218-residue chain is Major NAD(P)H-flavin oxidoreductase (218 aa).

FMN is bound by residues 12-16 (RYTSK) and asparagine 73. Residue 154 to 159 (LARLNI) participates in NAD(+) binding. Residues 165-166 (EG) and 206-208 (KSR) each bind FMN.

This sequence belongs to the nitroreductase family. As to quaternary structure, homodimer. The cofactor is FMN.

Involved in bioluminescence. It is a good supplier of reduced flavin mononucleotide (FMNH2) to the bioluminescence reaction. Major FMN reductase. It is capable of using both NADH and NADPH as electron donors. As electron acceptor, FMN is the most effective, FAD is considerably effective, and riboflavin is the least effective. The protein is Major NAD(P)H-flavin oxidoreductase of Aliivibrio fischeri (Vibrio fischeri).